A 418-amino-acid polypeptide reads, in one-letter code: Tektin-1 (418 aa).

4 coiled-coil regions span residues 20 to 107, 134 to 177, 266 to 308, and 332 to 383; these read NKSQ…SYKE, QELQ…DLRD, NGLK…QQEG, and IAQY…ENTI.

This sequence belongs to the tektin family. In terms of assembly, microtubule inner protein component of sperm flagellar doublet microtubules. Ubiquitinated, leading to its degradation. Deubiquitinated by USP16, promoting its stability.

It is found in the cytoplasm. The protein localises to the cytoskeleton. The protein resides in the cilium axoneme. Its subcellular location is the flagellum axoneme. In terms of biological role, microtubule inner protein (MIP) part of the dynein-decorated doublet microtubules (DMTs) in cilia and flagellar axoneme. Forms filamentous polymers in the walls of ciliary and flagellar microtubules. The sequence is that of Tektin-1 (Tekt1) from Mus musculus (Mouse).